Consider the following 283-residue polypeptide: BTB/POZ domain-containing protein KCTD15 (283 aa).

A disordered region spans residues 1–32 (MPHRKERPSGSSLHTHGSTGTAEGGNMSRLSL). The span at 9–21 (SGSSLHTHGSTGT) shows a compositional bias: low complexity. A phosphoserine mark is found at Ser31, Ser35, and Ser38. Residues 56 to 126 (APVHIDVGGH…LRTSKLLLPD (71 aa)) form the BTB domain.

As to quaternary structure, forms oligomers, predominantly homopentamers. Interacts with KCTD1, probably forming heteropentamers depending on its abundance in a cell-type dependent manner. Interacts with TFAP2A; this interaction inhibits TFAP2A transcriptional activation.

It is found in the nucleus. In terms of biological role, during embryonic development, it is involved in neural crest formation. Inhibits AP2 transcriptional activity by interaction with its activation domain. The chain is BTB/POZ domain-containing protein KCTD15 (KCTD15) from Homo sapiens (Human).